The sequence spans 988 residues: Transposase for transposon Tn21 (988 aa).

Residues 672–696 (GDGTTSSSDEQNFRTASKAKSTGHI) form a disordered region. Positions 674-695 (GTTSSSDEQNFRTASKAKSTGH) are enriched in polar residues.

It belongs to the transposase 7 family.

Its function is as follows. Required for transposition of transposon Tn21. The protein is Transposase for transposon Tn21 (tnpA) of Escherichia coli.